We begin with the raw amino-acid sequence, 435 residues long: UPF0761 membrane protein mma_2179 (435 aa).

The next 6 helical transmembrane spans lie at 45–65, 103–123, 142–162, 177–197, 208–228, and 252–272; these read VLAL…FPLF, LSAF…LMID, ILVY…SMTF, VPFV…MVAF, LVEW…FEIV, and FPIF…GAVV.

This sequence belongs to the UPF0761 family.

The protein resides in the cell inner membrane. This chain is UPF0761 membrane protein mma_2179, found in Janthinobacterium sp. (strain Marseille) (Minibacterium massiliensis).